A 296-amino-acid chain; its full sequence is Cell division protein DivIB (296 aa).

Over Met1–Arg25 the chain is Cytoplasmic. A helical transmembrane segment spans residues Leu26–Phe46. Over Thr47–Ser296 the chain is Extracellular. A POTRA domain is found at Ser50 to Tyr118.

This sequence belongs to the FtsQ/DivIB family. DivIB subfamily.

The protein resides in the cell membrane. In terms of biological role, cell division protein that may be involved in stabilizing or promoting the assembly of the division complex. This chain is Cell division protein DivIB, found in Macrococcus caseolyticus (strain JCSC5402) (Macrococcoides caseolyticum).